The primary structure comprises 251 residues: Flap endonuclease Xni (251 aa).

D104 contributes to the Mg(2+) binding site. In terms of domain architecture, 5'-3' exonuclease spans 160 to 250; that stretch reads VLPRQLPDYW…SGNLQQLRLK (91 aa). K(+)-binding residues include L171, A172, P180, V182, and V185. The tract at residues 184–189 is interaction with DNA; the sequence is GVGAKT.

The protein belongs to the Xni family. The cofactor is Mg(2+). K(+) serves as cofactor.

Has flap endonuclease activity. During DNA replication, flap endonucleases cleave the 5'-overhanging flap structure that is generated by displacement synthesis when DNA polymerase encounters the 5'-end of a downstream Okazaki fragment. This chain is Flap endonuclease Xni, found in Yersinia pestis bv. Antiqua (strain Nepal516).